Reading from the N-terminus, the 373-residue chain is UPF0725 protein At1g23950 (373 aa).

Thr2 bears the N-acetylthreonine mark.

Belongs to the UPF0725 (EMB2204) family.

This chain is UPF0725 protein At1g23950, found in Arabidopsis thaliana (Mouse-ear cress).